Consider the following 772-residue polypeptide: Gelsolin (772 aa).

A signal peptide spans 1–17 (LGALVVALCALSPPARA). Residues 18–33 (ATASRGAPQARAPQGR) constitute a propeptide that is removed on maturation. A disordered region spans residues 19-38 (TASRGAPQARAPQGRVSPMR). The actin-severing stretch occupies residues 41-166 (TMVVEHPEFL…YKKGGVASGF (126 aa)). The stretch at 66-148 (FDLVPVPPNL…VQGFESATFL (83 aa)) is one Gelsolin-like 1 repeat. The residue at position 76 (tyrosine 76) is a Phosphotyrosine. Ca(2+)-binding residues include glycine 82, aspartate 83, glutamate 114, aspartate 126, glycine 131, and alanine 133. An actin-actin interfilament contact point region spans residues 113-116 (DESG). A 1,2-diacyl-sn-glycero-3-phospho-(1D-myo-inositol-4,5-bisphosphate) is bound at residue 152 to 159 (KSGLKYKK). Valine 162 is a binding site for Ca(2+). Residue 178–186 (RLFQVKGRR) coordinates a 1,2-diacyl-sn-glycero-3-phospho-(1D-myo-inositol-4,5-bisphosphate). The stretch at 188-260 (VRATEVPVSW…SEEDAEPAGM (73 aa)) is one Gelsolin-like 2 repeat. Residues glycine 203 and aspartate 204 each contribute to the Ca(2+) site. Cysteines 205 and 218 form a disulfide. 5 residues coordinate Ca(2+): glutamate 226, aspartate 276, glutamate 319, aspartate 320, and glutamate 344. The stretch at 307–379 (DENPFAQGAL…LPEGGETPLF (73 aa)) is one Gelsolin-like 3 repeat. Tyrosine 399 and tyrosine 455 each carry phosphotyrosine. The actin-binding, Ca-sensitive stretch occupies residues 424 to 772 (AAQHGMDDDG…LDRAIAELAA (349 aa)). The stretch at 445 to 526 (SNKVPVDPAT…VQGKEPAHLM (82 aa)) is one Gelsolin-like 4 repeat. Residues glycine 461, aspartate 462, glutamate 492, aspartate 504, glycine 509, proline 511, and threonine 541 each coordinate Ca(2+). The Gelsolin-like 5 repeat unit spans residues 567–632 (RAVEVIPKAG…AEGSEPDSFW (66 aa)). Position 574 is an N6-acetyllysine (lysine 574). Positions 581 and 582 each coordinate Ca(2+). At tyrosine 593 the chain carries Phosphotyrosine. Glutamate 604 serves as a coordination point for Ca(2+). A Phosphotyrosine modification is found at tyrosine 641. The Gelsolin-like 6 repeat unit spans residues 671-746 (VEEVPGELMQ…VKQGFEPPSF (76 aa)). Ca(2+) contacts are provided by aspartate 686, aspartate 687, and glutamate 709. At threonine 732 the chain carries Phosphothreonine.

Belongs to the villin/gelsolin family. Binds to actin and to fibronectin. Identified in a complex composed of ACTA1, COBL, GSN and TMSB4X. Interacts with the inactive form of EIF2AK2/PKR. Interacts with FLII. Phosphorylated on tyrosine residues in vitro.

Its subcellular location is the cytoplasm. It localises to the cytoskeleton. The protein localises to the secreted. In terms of biological role, calcium-regulated, actin-modulating protein that binds to the plus (or barbed) ends of actin monomers or filaments, preventing monomer exchange (end-blocking or capping). It can promote the assembly of monomers into filaments (nucleation) as well as sever filaments already formed. Plays a role in ciliogenesis. This is Gelsolin (GSN) from Sus scrofa (Pig).